A 499-amino-acid chain; its full sequence is E3 ubiquitin-protein ligase TRIM69 (499 aa).

The tract at residues methionine 1–glutamine 152 is necessary for nuclear localization. Residues cysteine 41–lysine 82 form an RING-type zinc finger. Residues phenylalanine 160–asparagine 265 adopt a coiled-coil conformation. Positions proline 305 to glutamine 499 constitute a B30.2/SPRY domain. Serine 341 is subject to Phosphoserine.

This sequence belongs to the TRIM/RBCC family. Homo-multimer; required for antiviral activity. Interacts with PML. Phosphorylated. Phosphorylation is necessary for nuclear localization.

Its subcellular location is the cytoplasm. The protein localises to the nucleus. It is found in the nucleus speckle. The protein resides in the cytoskeleton. It localises to the microtubule organizing center. Its subcellular location is the centrosome. It carries out the reaction S-ubiquitinyl-[E2 ubiquitin-conjugating enzyme]-L-cysteine + [acceptor protein]-L-lysine = [E2 ubiquitin-conjugating enzyme]-L-cysteine + N(6)-ubiquitinyl-[acceptor protein]-L-lysine.. It functions in the pathway protein modification; protein ubiquitination. Its function is as follows. E3 ubiquitin ligase that plays an important role in antiviral immunity by restricting different viral infections including dengue virus or vesicular stomatitis indiana virus. Ubiquitinates viral proteins such as dengue virus NS3 thereby limiting infection. In addition, acts as a key mediator of type I interferon induced microtubule stabilization by directly associating to microtubules independently of its E3 ligase activity. Also plays a role in cataract formation together with TP53. Mechanistically, inhibits UVB-induced cell apoptosis and reactive oxygen species (ROS) production by inducing TP53 ubiquitination. Regulates centrosome dynamics and mitotic progression by ubiquitinating STK3/MST2; leading to its redistribution to the perinuclear cytoskeleton and subsequent phosphorylation by PLK1. This chain is E3 ubiquitin-protein ligase TRIM69 (Trim69), found in Rattus norvegicus (Rat).